The following is a 249-amino-acid chain: General transcription factor IIF subunit 2 (249 aa).

Position 2 is an N-acetylalanine (A2). 3 positions are modified to N6-acetyllysine: K22, K33, and K137. A Phosphoserine modification is found at S142. 2 residues coordinate DNA: G227 and H229. S248 is subject to Phosphoserine.

This sequence belongs to the TFIIF beta subunit family. As to quaternary structure, heterodimer of an alpha and a beta subunit. Interacts with HTATSF1 and GPBP1. Interacts with URI1. Interacts with GTF2B (via N-terminus); this interaction is inhibited in presence of GTF2F1. Part of TBP-based Pol II pre-initiation complex (PIC), in which Pol II core assembles with general transcription factors and other specific initiation factors including GTF2E1, GTF2E2, GTF2F1, GTF2F2, TCEA1, ERCC2, ERCC3, GTF2H2, GTF2H3, GTF2H4, GTF2H5, GTF2A1, GTF2A2, GTF2B and TBP; this large multi-subunit PIC complex mediates DNA unwinding and targets Pol II core to the transcription start site where the first phosphodiester bond forms.

Its subcellular location is the nucleus. TFIIF is a general transcription initiation factor that binds to RNA polymerase II and helps to recruit it to the initiation complex in collaboration with TFIIB. It promotes transcription elongation. The sequence is that of General transcription factor IIF subunit 2 (Gtf2f2) from Rattus norvegicus (Rat).